Consider the following 174-residue polypeptide: Transcriptional repressor NrdR (174 aa).

Residues 3 to 34 (CPICHFPETDVIDTRKLYEGEVIRRRRKCRAC) fold into a zinc finger. The ATP-cone domain occupies 49–139 (LMVVKKDGTR…VYRSFADIGK (91 aa)). Residues 151–174 (EGTRNGHSSAATTDQGTTDNHSRM) are disordered. Polar residues predominate over residues 155-174 (NGHSSAATTDQGTTDNHSRM).

It belongs to the NrdR family. The cofactor is Zn(2+).

In terms of biological role, negatively regulates transcription of bacterial ribonucleotide reductase nrd genes and operons by binding to NrdR-boxes. This Chloroflexus aggregans (strain MD-66 / DSM 9485) protein is Transcriptional repressor NrdR.